Here is a 418-residue protein sequence, read N- to C-terminus: MNTHIYADIITIGDEILYGQITDTNSQWISAELDKLGIKTRRKSSVSDKADEILQMLREASQRSSIVILTGGLGPTNDDITKKTLCTYFKTELVWNDAVLAHLENLFFIRGRVMNALNKEQALIPSNCEVLTNRHGTAPGMWFDVNGVVYISLPGVPFEMKGILSDVGFDKLKHRFQTPHIIHRVIKTSGVGETTLAELIADWEAALPPYMGLAYLPSAGEVKLRLTGSGDNLEQLQAEIQQQVDSVLPSIEKYVYGFDADTLEYTVGQLLKKQNKTIATAESCTGGYLAHLLTSVAGASAYYSGSVVAYQNKIKTDFLDVPAEVLSKYGAVSEETVKIMAAEVRKKFGASIGVSASGIAGPDGGTEEKPVGTIWIAYADESKVVTLKLQLSNIRENNIRMTALAILNLVRRQLKEVK.

Belongs to the CinA family.

The chain is CinA-like protein from Cytophaga hutchinsonii (strain ATCC 33406 / DSM 1761 / CIP 103989 / NBRC 15051 / NCIMB 9469 / D465).